The chain runs to 346 residues: uncharacterized protein (346 aa).

The protein belongs to the PhyH family.

The protein localises to the cytoplasm. This is an uncharacterized protein from Saccharomyces cerevisiae (strain ATCC 204508 / S288c) (Baker's yeast).